The primary structure comprises 156 residues: Small ribosomal subunit protein uS7 (156 aa).

Belongs to the universal ribosomal protein uS7 family. Part of the 30S ribosomal subunit. Contacts proteins S9 and S11.

Its function is as follows. One of the primary rRNA binding proteins, it binds directly to 16S rRNA where it nucleates assembly of the head domain of the 30S subunit. Is located at the subunit interface close to the decoding center, probably blocks exit of the E-site tRNA. This Bacillus cereus (strain B4264) protein is Small ribosomal subunit protein uS7.